Reading from the N-terminus, the 186-residue chain is Ribosome-recycling factor (186 aa).

This sequence belongs to the RRF family.

Its subcellular location is the cytoplasm. Responsible for the release of ribosomes from messenger RNA at the termination of protein biosynthesis. May increase the efficiency of translation by recycling ribosomes from one round of translation to another. The polypeptide is Ribosome-recycling factor (Rickettsia africae (strain ESF-5)).